Reading from the N-terminus, the 480-residue chain is Mannose-1-phosphate guanylyltransferase ManC (480 aa).

The protein belongs to the mannose-6-phosphate isomerase type 2 family.

The catalysed reaction is alpha-D-mannose 1-phosphate + GTP + H(+) = GDP-alpha-D-mannose + diphosphate. The protein operates within nucleotide-sugar biosynthesis; GDP-alpha-D-mannose biosynthesis; GDP-alpha-D-mannose from alpha-D-mannose 1-phosphate (GTP route): step 1/1. In terms of biological role, involved in the biosynthesis of the capsular polysaccharide colanic acid. This chain is Mannose-1-phosphate guanylyltransferase ManC (manC), found in Salmonella typhimurium (strain LT2 / SGSC1412 / ATCC 700720).